The chain runs to 354 residues: Serum paraoxonase/lactonase 3 (354 aa).

An intrachain disulfide couples cysteine 42 to cysteine 352. N-linked (GlcNAc...) asparagine glycosylation is present at asparagine 50. The Ca(2+) site is built by glutamate 53 and aspartate 54. Histidine 114 acts as the Proton acceptor in catalysis. Isoleucine 116 is a binding site for Ca(2+). Serine 165 carries the post-translational modification Phosphoserine. Positions 167, 168, 223, 268, and 269 each coordinate Ca(2+). 2 N-linked (GlcNAc...) asparagine glycosylation sites follow: asparagine 269 and asparagine 323.

It belongs to the paraoxonase family. Homodimer. The cofactor is Ca(2+). Glycosylated. Post-translationally, the signal sequence is not cleaved.

The protein localises to the secreted. It localises to the extracellular space. The catalysed reaction is a phenyl acetate + H2O = a phenol + acetate + H(+). The enzyme catalyses An aryl dialkyl phosphate + H2O = dialkyl phosphate + an aryl alcohol.. It carries out the reaction an N-acyl-L-homoserine lactone + H2O = an N-acyl-L-homoserine + H(+). Functionally, has low activity towards the organophosphate paraxon and aromatic carboxylic acid esters. Rapidly hydrolyzes lactones such as statin prodrugs (e.g. lovastatin). Hydrolyzes aromatic lactones and 5- or 6-member ring lactones with aliphatic substituents but not simple lactones or those with polar substituents. The sequence is that of Serum paraoxonase/lactonase 3 (Pon3) from Rattus norvegicus (Rat).